We begin with the raw amino-acid sequence, 686 residues long: Catalase-2 (686 aa).

Over residues 1 to 27 the composition is skewed to basic and acidic residues; sequence MSDDQNKRVNEHSKDEQLEQYRTDNSG. A disordered region spans residues 1-43; it reads MSDDQNKRVNEHSKDEQLEQYRTDNSGKKMTTNQGLRVSEDEH. Catalysis depends on residues His78 and Asn151. Tyr365 lines the heme pocket.

It belongs to the catalase family. HPII subfamily. Heme is required as a cofactor.

The catalysed reaction is 2 H2O2 = O2 + 2 H2O. Decomposes hydrogen peroxide into water and oxygen; serves to protect cells from the toxic effects of hydrogen peroxide. Involved in sporulation. The protein is Catalase-2 (katE) of Bacillus subtilis (strain 168).